Consider the following 64-residue polypeptide: Putative neurotoxin 5 (64 aa).

Positions Met1 to Ala18 are cleaved as a signal peptide.

It belongs to the scolopendra neurotoxin 6 family. In terms of processing, contains 3 disulfide bonds. As to expression, expressed by the venom gland.

The protein resides in the secreted. In Scolopendra mutilans (Chinese red-headed centipede), this protein is Putative neurotoxin 5.